We begin with the raw amino-acid sequence, 407 residues long: Putative colanic acid biosynthesis glycosyl transferase WcaI (407 aa).

Its pathway is slime biogenesis; slime polysaccharide biosynthesis. The sequence is that of Putative colanic acid biosynthesis glycosyl transferase WcaI (wcaI) from Escherichia coli (strain K12).